A 398-amino-acid chain; its full sequence is Minor capsid protein (398 aa).

The interval 359–398 (EEASVTSTEETLTPAQEAARTRAANKARKEAELAAATAEQ) is disordered. Polar residues predominate over residues 362-372 (SVTSTEETLTP). The span at 373 to 382 (AQEAARTRAA) shows a compositional bias: low complexity.

Belongs to the T7virus minor capsid protein family. In terms of assembly, interacts with the connector protein and the major capsid protein.

It localises to the virion. Assembles with the major capsid protein to form an icosahedral capsid with a T=7 symmetry, about 60 nm in diameter, and consisting of 415 capsid proteins. The major and minor capsid proteins are incorporated into the capsid in about a 90/10 ratio respectively. Once the capsid formed, encapsidates one single copy of the viral genome. This Escherichia coli (Bacteriophage T7) protein is Minor capsid protein.